The following is a 309-amino-acid chain: Large ribosomal subunit protein uL22m (309 aa).

The transit peptide at 1–25 directs the protein to the mitochondrion; that stretch reads MNFHTARISQVGVISRALLSSVSRR. Positions 40 to 63 are disordered; that stretch reads SLFGSITENKPKEGKNRGDEDAGS. Residues 48 to 59 show a composition bias toward basic and acidic residues; the sequence is NKPKEGKNRGDE.

It belongs to the universal ribosomal protein uL22 family. Component of the mitochondrial large ribosomal subunit (mt-LSU). Mature yeast 74S mitochondrial ribosomes consist of a small (37S) and a large (54S) subunit. The 37S small subunit contains a 15S ribosomal RNA (15S mt-rRNA) and 34 different proteins. The 54S large subunit contains a 21S rRNA (21S mt-rRNA) and 46 different proteins. uL22m forms the wall of the exit tunnel.

Its subcellular location is the mitochondrion. In terms of biological role, component of the mitochondrial ribosome (mitoribosome), a dedicated translation machinery responsible for the synthesis of mitochondrial genome-encoded proteins, including at least some of the essential transmembrane subunits of the mitochondrial respiratory chain. The mitoribosomes are attached to the mitochondrial inner membrane and translation products are cotranslationally integrated into the membrane. The polypeptide is Large ribosomal subunit protein uL22m (MRPL22) (Saccharomyces cerevisiae (strain ATCC 204508 / S288c) (Baker's yeast)).